The primary structure comprises 619 residues: Dihydroxy-acid dehydratase (619 aa).

D81 is a Mg(2+) binding site. A [2Fe-2S] cluster-binding site is contributed by C122. The Mg(2+) site is built by D123 and K124. The residue at position 124 (K124) is an N6-carboxylysine. C198 provides a ligand contact to [2Fe-2S] cluster. Residue E494 participates in Mg(2+) binding. S520 serves as the catalytic Proton acceptor.

It belongs to the IlvD/Edd family. Homodimer. It depends on [2Fe-2S] cluster as a cofactor. Mg(2+) serves as cofactor.

It carries out the reaction (2R)-2,3-dihydroxy-3-methylbutanoate = 3-methyl-2-oxobutanoate + H2O. The catalysed reaction is (2R,3R)-2,3-dihydroxy-3-methylpentanoate = (S)-3-methyl-2-oxopentanoate + H2O. The protein operates within amino-acid biosynthesis; L-isoleucine biosynthesis; L-isoleucine from 2-oxobutanoate: step 3/4. It functions in the pathway amino-acid biosynthesis; L-valine biosynthesis; L-valine from pyruvate: step 3/4. Functions in the biosynthesis of branched-chain amino acids. Catalyzes the dehydration of (2R,3R)-2,3-dihydroxy-3-methylpentanoate (2,3-dihydroxy-3-methylvalerate) into 2-oxo-3-methylpentanoate (2-oxo-3-methylvalerate) and of (2R)-2,3-dihydroxy-3-methylbutanoate (2,3-dihydroxyisovalerate) into 2-oxo-3-methylbutanoate (2-oxoisovalerate), the penultimate precursor to L-isoleucine and L-valine, respectively. This chain is Dihydroxy-acid dehydratase, found in Neisseria meningitidis serogroup A / serotype 4A (strain DSM 15465 / Z2491).